Consider the following 255-residue polypeptide: DASH complex subunit SPC34 (255 aa).

The interval 53 to 81 (LFSVPPPPPRQTTLTAEQQQQQKPSNRRQ) is disordered. The span at 63–81 (QTTLTAEQQQQQKPSNRRQ) shows a compositional bias: polar residues. Residues 176–248 (LAYYEAKIAE…QARLRALDAD (73 aa)) are a coiled coil.

It belongs to the DASH complex SPC34 family. As to quaternary structure, component of the DASH complex consisting of ASK1, DAD1, DAD2, DAD3, DAD4, DAM1, DUO1, HSK3, SPC19 and SPC34, with a stoichiometry of one copy of each subunit per complex. Multiple DASH complexes oligomerize to form a ring that encircles spindle microtubules and organizes the rod-like NDC80 complexes of the outer kinetochore of the outer kinetochore. DASH complex oligomerization strengthens microtubule attachments. On cytoplasmic microtubules, DASH complexes appear to form patches instead of rings.

Its subcellular location is the nucleus. It localises to the cytoplasm. The protein localises to the cytoskeleton. The protein resides in the spindle. It is found in the chromosome. Its subcellular location is the centromere. It localises to the kinetochore. In terms of biological role, component of the DASH complex that connects microtubules with kinetochores and couples microtubule depolymerisation to chromosome movement; it is involved in retrieving kinetochores to the spindle poles before their re-orientation on the spindle in early mitosis and allows microtubule depolymerization to pull chromosomes apart and resist detachment during anaphase. Kinetochores, consisting of a centromere-associated inner segment and a microtubule-contacting outer segment, play a crucial role in chromosome segregation by mediating the physical connection between centromeric DNA and microtubules. Kinetochores also serve as an input point for the spindle assembly checkpoint, which delays anaphase until all chromosomes have bioriented on the mitotic spindle. The sequence is that of DASH complex subunit SPC34 from Chaetomium thermophilum (strain DSM 1495 / CBS 144.50 / IMI 039719) (Thermochaetoides thermophila).